Here is a 435-residue protein sequence, read N- to C-terminus: D-aminoacyl-tRNA deacylase (435 aa).

The protein belongs to the DtdA deacylase family. In terms of assembly, monomer. The cofactor is Zn(2+).

It carries out the reaction a D-aminoacyl-tRNA + H2O = a tRNA + a D-alpha-amino acid + H(+). The catalysed reaction is glycyl-tRNA(Ala) + H2O = tRNA(Ala) + glycine + H(+). Functionally, D-aminoacyl-tRNA deacylase with broad substrate specificity. By recycling D-aminoacyl-tRNA to D-amino acids and free tRNA molecules, this enzyme counteracts the toxicity associated with the formation of D-aminoacyl-tRNA entities in vivo. The chain is D-aminoacyl-tRNA deacylase from Methanosphaerula palustris (strain ATCC BAA-1556 / DSM 19958 / E1-9c).